A 310-amino-acid polypeptide reads, in one-letter code: Deoxyribonuclease gamma (310 aa).

A signal peptide spans 1–25 (MSLYPASPYLASLLLFILALHGALS). The Bipartite nuclear localization signal motif lies at 40–56 (KKENHNAMDIIVKIIKR). Residues E105 and H160 contribute to the active site. Residues C199 and C236 are joined by a disulfide bond. A not required for free DNA-nuclease activity but required for activity towards liposome-coated DNA region spans residues 289–310 (SRAFTNSRKSVSLKKKKKGSRS). The Nuclear localization signal motif lies at 301-307 (LKKKKKG).

The protein belongs to the DNase I family. Monomer. Ca(2+) is required as a cofactor. It depends on Mg(2+) as a cofactor. In terms of processing, seems to be synthesized as an inactive precursor protein and converted into an active mature enzyme by removal of the N-terminal precursor peptide during apoptosis. Poly-ADP-ribosylated by PARP1. ADP-ribosylation negatively regulates enzymatic activity during apoptosis. As to expression, detected at high levels in spleen, lymph nodes, thymus and liver. Observed also in kidney and testis, but not in brain or heart.

It is found in the nucleus. Its subcellular location is the secreted. With respect to regulation, inhibited by zinc. Functionally, has DNA hydrolytic activity. Is capable of both single- and double-stranded DNA cleavage, producing DNA fragments with 3'-OH ends. Can cleave chromatin to nucleosomal units and cleaves nucleosomal and liposome-coated DNA. Acts in internucleosomal DNA fragmentation (INDF) during apoptosis and necrosis. The role in apoptosis includes myogenic and neuronal differentiation, and BCR-mediated clonal deletion of self-reactive B cells. Is active on chromatin in apoptotic cell-derived membrane-coated microparticles and thus suppresses anti-DNA autoimmunity. Together with DNASE1, plays a key role in degrading neutrophil extracellular traps (NETs). NETs are mainly composed of DNA fibers and are released by neutrophils to bind pathogens during inflammation. Degradation of intravascular NETs by DNASE1 and DNASE1L3 is required to prevent formation of clots that obstruct blood vessels and cause organ damage following inflammation. The polypeptide is Deoxyribonuclease gamma (Dnase1l3) (Rattus norvegicus (Rat)).